The primary structure comprises 172 residues: Transcriptional regulator TAC1 (172 aa).

The tract at residues 1–28 (MENIKNPKNADDCSDSISKNSHQGVDDS) is disordered. The segment covering 15 to 28 (DSISKNSHQGVDDS) has biased composition (polar residues). The segment at 35 to 57 (YVCSFCIRGFSNAQALGGHMNIH) adopts a C2H2-type zinc-finger fold. The EAR-like (transcriptional repression) motif lies at 156–160 (LDLEL).

Preferentially expressed in roots and flowers. Slightly expressed in leaves and stems.

Its subcellular location is the nucleus. Its function is as follows. Activation factor which mediates telomerase activity and potentiates responses to auxin through the regulation of BT2. Binds in vitro to the DNA sequence 5'-GACAGTGTTAC-3' of the BT2 promoter. This Arabidopsis thaliana (Mouse-ear cress) protein is Transcriptional regulator TAC1 (TAC1).